A 1254-amino-acid polypeptide reads, in one-letter code: Protein transport protein Sec31A (1254 aa).

WD repeat units lie at residues 4 to 47 (KEIN…EIFE), 64 to 111 (SSPH…AGDS), 120 to 160 (KHTG…SPMT), 166 to 206 (QPQE…LIIK), 209 to 254 (DHSN…SPLK), 258 to 298 (NHTR…VLYE), and 301 to 341 (TSTQ…NDNA). Over residues 364 to 383 (TLPPLQLPQQTSPQSTITPL) the composition is skewed to low complexity. Residues 364-386 (TLPPLQLPQQTSPQSTITPLKKP) are disordered. A WD 8; interaction with SEC13 repeat occupies 397–428 (SFAFGGKLVTLDNIKPTAQQPQQTAAHVVHIS). Disordered regions lie at residues 818–892 (PMQT…QSPA), 983–1008 (CFQH…GTQH), and 1058–1125 (PPAP…PGAP). Residues 832-846 (AQPAAPAVPPQYYQQ) show a composition bias toward low complexity. Composition is skewed to polar residues over residues 847 to 863 (GRSA…TPTA) and 872 to 881 (VPSSDPQGDS). A compositionally biased stretch (low complexity) spans 1080–1091 (QTLQPQQQVPDQ).

Belongs to the WD repeat SEC31 family. COPII is composed of at least 5 proteins: the SEC23/24 complex, the SEC13/31 complex and SAR1. SEC13 and SEC31 make a 2:2 tetramer that forms the edge element of the COPII outer coat. The tetramer self-assembles in multiple copies to form the complete polyhedral cage. Interacts (via WD 8) with SEC13.

The protein resides in the cytoplasm. Its subcellular location is the cytoplasmic vesicle. It localises to the COPII-coated vesicle membrane. It is found in the endoplasmic reticulum membrane. Its function is as follows. Component of the coat protein complex II (COPII) which promotes the formation of transport vesicles from the endoplasmic reticulum (ER). The coat has two main functions, the physical deformation of the endoplasmic reticulum membrane into vesicles and the selection of cargo molecules. In Danio rerio (Zebrafish), this protein is Protein transport protein Sec31A (sec31a).